We begin with the raw amino-acid sequence, 1262 residues long: Cytoplasmic FMR1-interacting protein homolog (1262 aa).

Positions 519–550 are disordered; it reads LNRMTDVKGKKKSSAPKGDSANSSSSDIRIPR.

It belongs to the CYFIP family. In terms of assembly, interacts with gex-3.

The protein localises to the cytoplasm. In terms of biological role, required for initial steps of body morphogenesis. May play a role in egg laying and yolk protein clatherin-mediated endocytosis by oocytes during oogenesis. Plays a role in the formation of muscle connections, also called muscle arm extensions, between the body wall and the motor axons in the dorsal and ventral cord. This is Cytoplasmic FMR1-interacting protein homolog from Caenorhabditis elegans.